The following is a 705-amino-acid chain: Tetratricopeptide repeat protein 12 (705 aa).

Thr71 bears the Phosphothreonine mark. TPR repeat units lie at residues Ala106–Met139, Lys140–Cys173, and Thr174–Leu207.

As to expression, expressed in testis and in epithelial cells of trachea and bronchial tube.

The protein resides in the cytoplasm. In terms of biological role, cytoplasmic protein that plays a role in the proper assembly of dynein arm complexes in motile cilia in both respiratory cells and sperm flagella. This Homo sapiens (Human) protein is Tetratricopeptide repeat protein 12 (TTC12).